A 346-amino-acid chain; its full sequence is Probable 3-hydroxyacyl-CoA dehydrogenase (346 aa).

The segment at 322–346 is disordered; sequence RANLSPSATPCTPWKARKATSCAPP.

This sequence belongs to the 3-hydroxyacyl-CoA dehydrogenase family.

The catalysed reaction is a (3S)-3-hydroxyacyl-CoA + NAD(+) = a 3-oxoacyl-CoA + NADH + H(+). In Deinococcus radiodurans (strain ATCC 13939 / DSM 20539 / JCM 16871 / CCUG 27074 / LMG 4051 / NBRC 15346 / NCIMB 9279 / VKM B-1422 / R1), this protein is Probable 3-hydroxyacyl-CoA dehydrogenase.